We begin with the raw amino-acid sequence, 81 residues long: Large ribosomal subunit protein bL28 (81 aa).

The protein belongs to the bacterial ribosomal protein bL28 family.

The polypeptide is Large ribosomal subunit protein bL28 (Gloeobacter violaceus (strain ATCC 29082 / PCC 7421)).